The chain runs to 180 residues: Large ribosomal subunit protein uL6 (180 aa).

It belongs to the universal ribosomal protein uL6 family. Part of the 50S ribosomal subunit.

Its function is as follows. This protein binds to the 23S rRNA, and is important in its secondary structure. It is located near the subunit interface in the base of the L7/L12 stalk, and near the tRNA binding site of the peptidyltransferase center. This Thermus thermophilus (strain ATCC BAA-163 / DSM 7039 / HB27) protein is Large ribosomal subunit protein uL6.